The primary structure comprises 184 residues: ATP synthase subunit delta (184 aa).

This sequence belongs to the ATPase delta chain family. F-type ATPases have 2 components, F(1) - the catalytic core - and F(0) - the membrane proton channel. F(1) has five subunits: alpha(3), beta(3), gamma(1), delta(1), epsilon(1). F(0) has three main subunits: a(1), b(2) and c(10-14). The alpha and beta chains form an alternating ring which encloses part of the gamma chain. F(1) is attached to F(0) by a central stalk formed by the gamma and epsilon chains, while a peripheral stalk is formed by the delta and b chains.

The protein localises to the cell inner membrane. In terms of biological role, f(1)F(0) ATP synthase produces ATP from ADP in the presence of a proton or sodium gradient. F-type ATPases consist of two structural domains, F(1) containing the extramembraneous catalytic core and F(0) containing the membrane proton channel, linked together by a central stalk and a peripheral stalk. During catalysis, ATP synthesis in the catalytic domain of F(1) is coupled via a rotary mechanism of the central stalk subunits to proton translocation. Functionally, this protein is part of the stalk that links CF(0) to CF(1). It either transmits conformational changes from CF(0) to CF(1) or is implicated in proton conduction. The sequence is that of ATP synthase subunit delta from Caulobacter vibrioides (strain NA1000 / CB15N) (Caulobacter crescentus).